A 451-amino-acid chain; its full sequence is Macrophage scavenger receptor types I and II (451 aa).

The Cytoplasmic portion of the chain corresponds to 1 to 50 (MEQWDHFHNQQEDTDSCSESVKFDARSMTALLPPNPKNSPSLQEKLKSFK). Serine 27 carries the post-translational modification Phosphoserine. Residues 51–76 (AALIALYLLVFAVLIPLIGIVAAQLL) form a helical; Signal-anchor for type II membrane protein membrane-spanning segment. A spacer region spans residues 77-109 (KWETKNCSVSSTNANDITQSLTGKGNDSEEEMR). The Extracellular segment spans residues 77–451 (KWETKNCSVS…SEDAGVTCTL (375 aa)). N-linked (GlcNAc...) asparagine glycosylation is found at asparagine 82, asparagine 102, asparagine 143, asparagine 184, asparagine 221, asparagine 249, and asparagine 267. Positions 171 to 255 (NAIDEISKSL…VLNNITNDLR (85 aa)) form a coiled coil. A disordered region spans residues 267-346 (NITLIQGPPG…EKGSGNTLTP (80 aa)). A Collagen-like domain is found at 273-341 (GPPGPPGEKG…KGQKGEKGSG (69 aa)). The SRCR domain occupies 350 to 450 (VRLVGGSGPH…HSEDAGVTCT (101 aa)). Intrachain disulfides connect cysteine 375–cysteine 439, cysteine 388–cysteine 449, and cysteine 419–cysteine 429.

As to quaternary structure, homotrimer. Interacts with MYO18A. As to expression, isoform I, isoform II and isoform III are expressed in monocyte-derived macrophages. Isoform I and isoform II are expressed in the liver, placenta and brain.

The protein resides in the membrane. In terms of biological role, membrane glycoproteins implicated in the pathologic deposition of cholesterol in arterial walls during atherogenesis. Two types of receptor subunits exist. These receptors mediate the endocytosis of a diverse group of macromolecules, including modified low density lipoproteins (LDL). Isoform III does not internalize acetylated LDL. This chain is Macrophage scavenger receptor types I and II (MSR1), found in Homo sapiens (Human).